The primary structure comprises 128 residues: Phosphoribosyl-AMP cyclohydrolase (128 aa).

Aspartate 77 is a binding site for Mg(2+). Cysteine 78 is a Zn(2+) binding site. Mg(2+) is bound by residues aspartate 79 and aspartate 81. Cysteine 95 and cysteine 102 together coordinate Zn(2+).

It belongs to the PRA-CH family. As to quaternary structure, homodimer. It depends on Mg(2+) as a cofactor. Zn(2+) is required as a cofactor.

The protein localises to the cytoplasm. It catalyses the reaction 1-(5-phospho-beta-D-ribosyl)-5'-AMP + H2O = 1-(5-phospho-beta-D-ribosyl)-5-[(5-phospho-beta-D-ribosylamino)methylideneamino]imidazole-4-carboxamide. Its pathway is amino-acid biosynthesis; L-histidine biosynthesis; L-histidine from 5-phospho-alpha-D-ribose 1-diphosphate: step 3/9. Functionally, catalyzes the hydrolysis of the adenine ring of phosphoribosyl-AMP. The protein is Phosphoribosyl-AMP cyclohydrolase of Methylococcus capsulatus (strain ATCC 33009 / NCIMB 11132 / Bath).